A 101-amino-acid chain; its full sequence is MIPGEIITAAGEIELNAGLETVTIEVANSGDRPVQVGSHYHFAEANPGLLFDRDAARGKRLDIPAGTAVRFEPGQTRQVTLIPLSGKREVFGFRQQVMGKL.

This sequence belongs to the urease beta subunit family. Heterotrimer of UreA (gamma), UreB (beta) and UreC (alpha) subunits. Three heterotrimers associate to form the active enzyme.

It localises to the cytoplasm. The enzyme catalyses urea + 2 H2O + H(+) = hydrogencarbonate + 2 NH4(+). It functions in the pathway nitrogen metabolism; urea degradation; CO(2) and NH(3) from urea (urease route): step 1/1. The polypeptide is Urease subunit beta (Sinorhizobium medicae (strain WSM419) (Ensifer medicae)).